The chain runs to 215 residues: Agamous-like MADS-box protein AGL63 (215 aa).

An MADS-box domain is found at 1-61; that stretch reads MRKGKRVIKK…NRLYDFCSNS (61 aa). Residues 90 to 178 form the K-box domain; that stretch reads CSDCVKTKES…GSSWEQLMWQ (89 aa). Disordered stretches follow at residues 143 to 172 and 184 to 215; these read ARKSEFMHQQQQQQTDQKLKGKEKGQGSSW and MTCQRQKDPAPANEGGVPFLRWGTTHRRSSPP.

As to quaternary structure, forms homodimer. Interacts with AGL16. In terms of tissue distribution, expressed in bud pedicels, petals, anthers, style, ovary, seeds and embryos.

It localises to the nucleus. Its function is as follows. Probable transcription factor involved in the regulation of fruit growth. Contributes to integument development. Controls organ size via cell expansion. Involved in the regulation of longitudinal growth of the fruit evenly throughout the radial axis. Functions redundantly with TT16/AGL32 to repress nucellus growth and promote its degeneration. The polypeptide is Agamous-like MADS-box protein AGL63 (Arabidopsis thaliana (Mouse-ear cress)).